The primary structure comprises 37 residues: Esculentin-2P (37 aa).

A disulfide bond links C31 and C37.

In terms of tissue distribution, expressed by the skin glands.

The protein localises to the secreted. Antibacterial activity against Gram-negative bacterium E.coli. This is Esculentin-2P from Lithobates pipiens (Northern leopard frog).